The sequence spans 382 residues: Mannitol-1-phosphate 5-dehydrogenase (382 aa).

3–14 lines the NAD(+) pocket; the sequence is ALHFGAGNIGRG.

This sequence belongs to the mannitol dehydrogenase family.

The catalysed reaction is D-mannitol 1-phosphate + NAD(+) = beta-D-fructose 6-phosphate + NADH + H(+). This chain is Mannitol-1-phosphate 5-dehydrogenase, found in Mannheimia succiniciproducens (strain KCTC 0769BP / MBEL55E).